Here is a 383-residue protein sequence, read N- to C-terminus: Cytochrome b (383 aa).

4 consecutive transmembrane segments (helical) span residues 30 to 50 (FGSLLGLCLGIQILTGVLLAM), 74 to 96 (WILRYVHANGASLFFICVYCHIG), 109 to 129 (TWIVGVLIYFIMMLTAFIGYV), and 175 to 195 (FFSLHYLLPFVLVGLVLAHLL). Residues His-80 and His-94 each contribute to the heme b site. Heme b contacts are provided by His-179 and His-193. His-198 is a binding site for a ubiquinone. The next 4 helical transmembrane spans lie at 221–241 (FTIKDILGFLILLGVFVIIGI), 289–309 (GVLALFASILVLLLMPILDRS), 320–340 (AKFFFWFIVGDFFILTWIGSA), and 345–365 (EPYVLIGRIATIFYFGYFLVL).

Belongs to the cytochrome b family. The main subunits of complex b-c1 are: cytochrome b, cytochrome c1 and the Rieske protein. The cofactor is heme b.

The protein localises to the mitochondrion inner membrane. Functionally, component of the ubiquinol-cytochrome c reductase complex (complex III or cytochrome b-c1 complex) that is part of the mitochondrial respiratory chain. The b-c1 complex mediates electron transfer from ubiquinol to cytochrome c. Contributes to the generation of a proton gradient across the mitochondrial membrane that is then used for ATP synthesis. The sequence is that of Cytochrome b (mt:Cyt-b) from Trichoplax adhaerens (Trichoplax reptans).